Here is a 663-residue protein sequence, read N- to C-terminus: Meiotically up-regulated gene 60 protein (663 aa).

Residues 578 to 644 form the KH domain; that stretch reads PAEMHFYVPE…SENLWAVRSL (67 aa).

The protein localises to the cytoplasm. Its subcellular location is the nucleus. It is found in the cytoskeleton. The protein resides in the microtubule organizing center. It localises to the spindle pole body. Its function is as follows. Has a role in meiosis. The sequence is that of Meiotically up-regulated gene 60 protein (mug60) from Schizosaccharomyces pombe (strain 972 / ATCC 24843) (Fission yeast).